Here is a 319-residue protein sequence, read N- to C-terminus: MKGYPFLDKANAPFVDRHVTKAGEIFYPWDGKRIDGFGLIGAPLSKSSISHSGASFAPTVIRKCLHAFSTYSVEEDLDLAQLKLTDLGDITMHVTDIVGSQARIEETMTKLLENEQNWQPIVLGGDHSISFPSIKAFASAKGTIGVIQFDAHHDLRNLEDGGPCNGTPFRSLLETGSLVGEHLVQIGIRDFSNSYPYRKYAEKHGVKVYTMKDVNARGLLTILDEAVAKLKRSVDVIYVSVDMDVLDQAHAPGCPAIGPGGMDSTTLLQGIFHLGKDSLVQGMDIVEVDPTLDFREMTSRAAAHVILNYLKGKCIKSIG.

H127, D150, H152, D154, D242, and D244 together coordinate Mn(2+).

The protein belongs to the arginase family. It depends on Mn(2+) as a cofactor.

The catalysed reaction is N-formimidoyl-L-glutamate + H2O = formamide + L-glutamate. It participates in amino-acid degradation; L-histidine degradation into L-glutamate; L-glutamate from N-formimidoyl-L-glutamate (hydrolase route): step 1/1. In terms of biological role, catalyzes the conversion of N-formimidoyl-L-glutamate to L-glutamate and formamide. The polypeptide is Formimidoylglutamase (Halalkalibacterium halodurans (strain ATCC BAA-125 / DSM 18197 / FERM 7344 / JCM 9153 / C-125) (Bacillus halodurans)).